We begin with the raw amino-acid sequence, 180 residues long: Bifunctional protein PyrR (180 aa).

The PRPP-binding motif lies at 99 to 111 (VILVDDVLYTCRT).

The protein belongs to the purine/pyrimidine phosphoribosyltransferase family. PyrR subfamily. Homodimer and homohexamer; in equilibrium.

It carries out the reaction UMP + diphosphate = 5-phospho-alpha-D-ribose 1-diphosphate + uracil. Functionally, regulates transcriptional attenuation of the pyrimidine nucleotide (pyr) operon by binding in a uridine-dependent manner to specific sites on pyr mRNA. This disrupts an antiterminator hairpin in the RNA and favors formation of a downstream transcription terminator, leading to a reduced expression of downstream genes. Its function is as follows. Also displays a weak uracil phosphoribosyltransferase activity which is not physiologically significant. This Clostridium botulinum (strain Alaska E43 / Type E3) protein is Bifunctional protein PyrR.